A 234-amino-acid chain; its full sequence is Purine nucleoside phosphorylase DeoD-type (234 aa).

Residue H4 coordinates a purine D-ribonucleoside. Phosphate-binding positions include G20, R24, R43, and 87-90; that span reads RIGS. A purine D-ribonucleoside-binding positions include E162, 179 to 181, and 203 to 204; these read EME and SD. Residue D204 is the Proton donor of the active site.

Belongs to the PNP/UDP phosphorylase family. In terms of assembly, homohexamer; trimer of homodimers.

The enzyme catalyses a purine D-ribonucleoside + phosphate = a purine nucleobase + alpha-D-ribose 1-phosphate. It carries out the reaction a purine 2'-deoxy-D-ribonucleoside + phosphate = a purine nucleobase + 2-deoxy-alpha-D-ribose 1-phosphate. Its function is as follows. Catalyzes the reversible phosphorolytic breakdown of the N-glycosidic bond in the beta-(deoxy)ribonucleoside molecules, with the formation of the corresponding free purine bases and pentose-1-phosphate. This chain is Purine nucleoside phosphorylase DeoD-type, found in Roseobacter denitrificans (strain ATCC 33942 / OCh 114) (Erythrobacter sp. (strain OCh 114)).